The following is a 210-amino-acid chain: Thymidylate kinase (210 aa).

10-17 lines the ATP pocket; it reads GLEGAGKS.

The protein belongs to the thymidylate kinase family.

It catalyses the reaction dTMP + ATP = dTDP + ADP. Functionally, phosphorylation of dTMP to form dTDP in both de novo and salvage pathways of dTTP synthesis. The chain is Thymidylate kinase from Hamiltonella defensa subsp. Acyrthosiphon pisum (strain 5AT).